The following is a 362-amino-acid chain: Somatostatin receptor type 5 (362 aa).

The span at 1–10 shows a compositional bias: polar residues; sequence MEPLSLTSTP. A disordered region spans residues 1–24; the sequence is MEPLSLTSTPSWNASAASSSSHNW. Residues 1 to 35 are Extracellular-facing; it reads MEPLSLTSTPSWNASAASSSSHNWSLVDPVSPMGA. Residues 11 to 24 show a composition bias toward low complexity; that stretch reads SWNASAASSSSHNW. 2 N-linked (GlcNAc...) asparagine glycosylation sites follow: asparagine 13 and asparagine 23. Residues 36 to 63 traverse the membrane as a helical segment; sequence RAVLVPVLYLLVCTVGLGGNTLVIYVVL. Residues 64–73 lie on the Cytoplasmic side of the membrane; it reads RYAKMKTVTN. The chain crosses the membrane as a helical span at residues 74–99; that stretch reads VYILNLAVADVLFMLGLPFLATQNAV. The Extracellular segment spans residues 100 to 110; it reads SYWPFGSFLCR. Cysteine 109 and cysteine 184 are disulfide-bonded. A helical transmembrane segment spans residues 111 to 132; the sequence is LVMTLDGINQFTSIFCLMVMSV. The Cytoplasmic segment spans residues 133–154; sequence DRYLAVVHPLRSARWRRPRVAK. A helical transmembrane segment spans residues 155–175; the sequence is LASAAVWVFSLLMSLPLLVFA. The Extracellular segment spans residues 176–195; it reads DVQEGWGTCNLSWPEPVGLW. Asparagine 185 is a glycosylation site (N-linked (GlcNAc...) asparagine). The helical transmembrane segment at 196-220 threads the bilayer; that stretch reads GAAFITYTSVLGFFGPLLVICLCYL. At 221–246 the chain is on the cytoplasmic side; the sequence is LIVVKVKAAGMRVGSSRRRRSERKVT. The chain crosses the membrane as a helical span at residues 247–272; sequence RMVVVVVLVFVGCWLPFFIVNIVNLA. The Extracellular portion of the chain corresponds to 273–282; the sequence is FTLPEEPTSA. The chain crosses the membrane as a helical span at residues 283–307; it reads GLYFFVVVLSYANSCANPLLYGFLS. At 308 to 362 the chain is on the cytoplasmic side; sequence DNFRQSFRKALCLRRGYGVEDADAIEPRPDKSGRPQTTLPTRSCEANGLMQTSRL. Cysteine 319 is lipidated: S-palmitoyl cysteine; by ZDHHC5. The disordered stretch occupies residues 330–362; that stretch reads DAIEPRPDKSGRPQTTLPTRSCEANGLMQTSRL.

The protein belongs to the G-protein coupled receptor 1 family. In terms of assembly, heterodimer with SSTR2. Heterodimerization with SSTR2 increases cell growth inhibition activity of SSTR2. Post-translationally, palmitoylated at Cys-319 by ZDHHC5, but not ZDHHC8. Palmitoylation creates an additional intracellular loop which is thought to be important for efficient coupling to G-proteins and may target the protein to lipid rafts. Expressed in adult brain but not in liver, heart, spleen, or kidney.

It is found in the cell membrane. Receptor for somatostatin-28. The activity of this receptor is mediated by G proteins which inhibit adenylyl cyclase. Increases cell growth inhibition activity of SSTR2 following heterodimerization. The protein is Somatostatin receptor type 5 (Sstr5) of Mus musculus (Mouse).